A 311-amino-acid polypeptide reads, in one-letter code: tRNA-cytidine(32) 2-sulfurtransferase (311 aa).

The short motif at 47 to 52 is the PP-loop motif element; it reads SGGKDS. [4Fe-4S] cluster-binding residues include Cys122, Cys125, and Cys213.

Belongs to the TtcA family. Homodimer. It depends on Mg(2+) as a cofactor. Requires [4Fe-4S] cluster as cofactor.

It is found in the cytoplasm. It carries out the reaction cytidine(32) in tRNA + S-sulfanyl-L-cysteinyl-[cysteine desulfurase] + AH2 + ATP = 2-thiocytidine(32) in tRNA + L-cysteinyl-[cysteine desulfurase] + A + AMP + diphosphate + H(+). It functions in the pathway tRNA modification. Its function is as follows. Catalyzes the ATP-dependent 2-thiolation of cytidine in position 32 of tRNA, to form 2-thiocytidine (s(2)C32). The sulfur atoms are provided by the cysteine/cysteine desulfurase (IscS) system. The protein is tRNA-cytidine(32) 2-sulfurtransferase of Escherichia coli O7:K1 (strain IAI39 / ExPEC).